We begin with the raw amino-acid sequence, 320 residues long: ATP-dependent 6-phosphofructokinase isozyme 1 (320 aa).

Gly12 is an ATP binding site. Residues 22 to 26 (RGVVR) and 55 to 60 (RYSVSD) each bind ADP. ATP is bound by residues 73–74 (RF) and 103–106 (GDGS). Asp104 serves as a coordination point for Mg(2+). 126–128 (TID) lines the substrate pocket. Asp128 functions as the Proton acceptor in the catalytic mechanism. Arg155 provides a ligand contact to ADP. Residues Arg163 and 170–172 (MGR) each bind substrate. Residues 186–188 (GCE), Lys212, and 214–216 (KKH) each bind ADP. Substrate contacts are provided by residues Glu223, Arg244, and 250–253 (HIQR).

It belongs to the phosphofructokinase type A (PFKA) family. ATP-dependent PFK group I subfamily. Prokaryotic clade 'B1' sub-subfamily. Homotetramer. It depends on Mg(2+) as a cofactor.

The protein resides in the cytoplasm. The catalysed reaction is beta-D-fructose 6-phosphate + ATP = beta-D-fructose 1,6-bisphosphate + ADP + H(+). It functions in the pathway carbohydrate degradation; glycolysis; D-glyceraldehyde 3-phosphate and glycerone phosphate from D-glucose: step 3/4. Its activity is regulated as follows. Allosterically activated by ADP and other diphosphonucleosides, and allosterically inhibited by phosphoenolpyruvate. Its function is as follows. Catalyzes the phosphorylation of D-fructose 6-phosphate to fructose 1,6-bisphosphate by ATP, the first committing step of glycolysis. The polypeptide is ATP-dependent 6-phosphofructokinase isozyme 1 (Shigella boydii serotype 18 (strain CDC 3083-94 / BS512)).